We begin with the raw amino-acid sequence, 155 residues long: Deoxyuridine 5'-triphosphate nucleotidohydrolase (155 aa).

Residues 71 to 73 (RSG), asparagine 84, 88 to 90 (TID), and lysine 98 contribute to the substrate site.

This sequence belongs to the dUTPase family. Mg(2+) is required as a cofactor.

It carries out the reaction dUTP + H2O = dUMP + diphosphate + H(+). The protein operates within pyrimidine metabolism; dUMP biosynthesis; dUMP from dCTP (dUTP route): step 2/2. In terms of biological role, this enzyme is involved in nucleotide metabolism: it produces dUMP, the immediate precursor of thymidine nucleotides and it decreases the intracellular concentration of dUTP so that uracil cannot be incorporated into DNA. The protein is Deoxyuridine 5'-triphosphate nucleotidohydrolase of Corynebacterium jeikeium (strain K411).